A 131-amino-acid polypeptide reads, in one-letter code: Sulfurtransferase TusD (131 aa).

Cys81 serves as the catalytic Cysteine persulfide intermediate.

The protein belongs to the DsrE/TusD family. Heterohexamer, formed by a dimer of trimers. The hexameric TusBCD complex contains 2 copies each of TusB, TusC and TusD. The TusBCD complex interacts with TusE.

The protein resides in the cytoplasm. Part of a sulfur-relay system required for 2-thiolation of 5-methylaminomethyl-2-thiouridine (mnm(5)s(2)U) at tRNA wobble positions. Accepts sulfur from TusA and transfers it in turn to TusE. The polypeptide is Sulfurtransferase TusD (Yersinia pseudotuberculosis serotype O:1b (strain IP 31758)).